The following is a 284-amino-acid chain: Tropomyosin (284 aa).

A coiled-coil region spans residues 1–284 (MDGIKKKMIA…DQTFAELTGY (284 aa)). The tract at residues 111–131 (TKLEEASKTAEESERGRKDLE) is disordered.

This sequence belongs to the tropomyosin family. In terms of assembly, homodimer.

Tropomyosin, in association with the troponin complex, plays a central role in the calcium dependent regulation of muscle contraction. The protein is Tropomyosin of Schistosoma japonicum (Blood fluke).